A 203-amino-acid polypeptide reads, in one-letter code: Outer-membrane lipoprotein carrier protein (203 aa).

Residues 1–21 (MKKLAITCALLSGMVVSQVWA) form the signal peptide. The tract at residues 184-203 (DASKFTFTPPKGVTVDDQRK) is disordered.

This sequence belongs to the LolA family. As to quaternary structure, monomer.

It localises to the periplasm. In terms of biological role, participates in the translocation of lipoproteins from the inner membrane to the outer membrane. Only forms a complex with a lipoprotein if the residue after the N-terminal Cys is not an aspartate (The Asp acts as a targeting signal to indicate that the lipoprotein should stay in the inner membrane). The chain is Outer-membrane lipoprotein carrier protein from Klebsiella pneumoniae (strain 342).